The chain runs to 194 residues: Potassium-transporting ATPase KdpC subunit (194 aa).

A helical transmembrane segment spans residues 12–34 (LFLLLLTGGVYPLLTTALGQWWF).

The protein belongs to the KdpC family. The system is composed of three essential subunits: KdpA, KdpB and KdpC.

The protein localises to the cell inner membrane. Part of the high-affinity ATP-driven potassium transport (or Kdp) system, which catalyzes the hydrolysis of ATP coupled with the electrogenic transport of potassium into the cytoplasm. This subunit acts as a catalytic chaperone that increases the ATP-binding affinity of the ATP-hydrolyzing subunit KdpB by the formation of a transient KdpB/KdpC/ATP ternary complex. This Salmonella choleraesuis (strain SC-B67) protein is Potassium-transporting ATPase KdpC subunit.